The sequence spans 637 residues: Anthranilate synthase, phenazine specific (637 aa).

An anthranilate synthase component I region spans residues 1 to 434; sequence MSQAAARLME…QRQQTQSDFS (434 aa). The Glutamine amidotransferase type-1 domain occupies 437 to 628; the sequence is QVLIVDAEDT…LRHALIHTPV (192 aa). Residues Cys517, His602, and Glu604 each act as for GATase activity in the active site.

The catalysed reaction is chorismate + L-glutamine = anthranilate + pyruvate + L-glutamate + H(+). Its pathway is antibiotic biosynthesis; phenazine biosynthesis. Its function is as follows. Involved in the biosynthesis of the antibiotic, phenazine, a nitrogen-containing heterocyclic molecule having important roles in virulence, competition and biological control. The protein is Anthranilate synthase, phenazine specific (phzE) of Pseudomonas fluorescens.